A 199-amino-acid chain; its full sequence is Large ribosomal subunit protein bL25 (199 aa).

It belongs to the bacterial ribosomal protein bL25 family. CTC subfamily. Part of the 50S ribosomal subunit; part of the 5S rRNA/L5/L18/L25 subcomplex. Contacts the 5S rRNA. Binds to the 5S rRNA independently of L5 and L18.

In terms of biological role, this is one of the proteins that binds to the 5S RNA in the ribosome where it forms part of the central protuberance. The polypeptide is Large ribosomal subunit protein bL25 (Herpetosiphon aurantiacus (strain ATCC 23779 / DSM 785 / 114-95)).